A 565-amino-acid chain; its full sequence is NAD-dependent malic enzyme (565 aa).

The active-site Proton donor is the Tyr104. Arg157 is a binding site for NAD(+). Catalysis depends on Lys175, which acts as the Proton acceptor. A divalent metal cation-binding residues include Glu246, Asp247, and Asp270. Asp270 and Asn418 together coordinate NAD(+).

Belongs to the malic enzymes family. In terms of assembly, homotetramer. Mg(2+) is required as a cofactor. The cofactor is Mn(2+).

It catalyses the reaction (S)-malate + NAD(+) = pyruvate + CO2 + NADH. The catalysed reaction is oxaloacetate + H(+) = pyruvate + CO2. In Klebsiella pneumoniae subsp. pneumoniae (strain ATCC 700721 / MGH 78578), this protein is NAD-dependent malic enzyme.